The chain runs to 318 residues: DNA repair nuclease/redox regulator APEX1 (318 aa).

The tract at residues 1-33 is necessary for interaction with YBX1, binding to RNA, association together with NPM1 to rRNA, endoribonuclease activity on abasic RNA and localization in the nucleoli; it reads MPKRGKKGAVAEDGDELKTEPEAKKSKTTAKKN. The segment at 1–60 is disordered; sequence MPKRGKKGAVAEDGDELKTEPEAKKSKTTAKKNDKEAAGEGPALYEDPPDQKTSPSGKPA. N6-acetyllysine; by EP300 is present on residues Lys-6 and Lys-7. A Nuclear localization signal (NLS) motif is present at residues 8–13; it reads GAVAED. Residues 16 to 38 show a composition bias toward basic and acidic residues; the sequence is ELKTEPEAKKSKTTAKKNDKEAA. The interval 23-33 is necessary for interaction with NPM1 and for efficient rRNA binding; it reads AKKSKTTAKKN. Lys-27, Lys-31, Lys-32, and Lys-35 each carry N6-acetyllysine. At Ser-54 the chain carries Phosphoserine. A Nuclear export signal (NES) motif is present at residues 64 to 80; the sequence is ICSWNVDGLRAWIKKKG. Cys-65 carries the post-translational modification S-nitrosocysteine; alternate. A disulfide bridge connects residues Cys-65 and Cys-93. Asp-70 contributes to the Mg(2+) binding site. Cys-93 carries the post-translational modification S-nitrosocysteine; alternate. Residue Glu-96 participates in Mg(2+) binding. Tyr-171 is an active-site residue. Lys-197 is subject to N6-acetyllysine. Positions 210 and 212 each coordinate Mg(2+). Residue Asp-210 is the Proton donor/acceptor of the active site. A Phosphothreonine; by CDK5 modification is found at Thr-233. A mitochondrial targeting sequence (MTS) region spans residues 289-318; that stretch reads HSLLTALCDSKIRSKALGSDHCPITLYLAL. Mg(2+) is bound at residue Asp-308. Cys-310 is subject to S-nitrosocysteine.

This sequence belongs to the DNA repair enzymes AP/ExoA family. In terms of assembly, monomer. Homodimer; disulfide-linked. Component of the SET complex, composed of at least APEX1, SET, ANP32A, HMGB2, NME1 and TREX1. Associates with the dimer XRCC5/XRCC6 in a DNA-dependent manner. Interacts with SIRT1; the interaction is increased in the context of genotoxic stress. Interacts with HDAC1, HDAC2 and HDAC3; the interactions are not dependent on the APEX1 acetylation status. Interacts with XRCC1; the interaction is induced by SIRT1 and increased with the APEX1 acetylated form. Interacts with NPM1 (via N-terminal domain); the interaction is RNA-dependent and decreases in hydrogen peroxide-damaged cells. Interacts (via N-terminus) with YBX1 (via C-terminus); the interaction is increased in presence of APEX1 acetylated at Lys-6 and Lys-7. Interacts with HNRNPL; the interaction is DNA-dependent. Interacts (via N-terminus) with KPNA1 and KPNA2. Interacts with TXN; the interaction stimulates the FOS/JUN AP-1 complex DNA-binding activity in a redox-dependent manner. Interacts with GZMA, KRT8, MDM2, POLB, PRDX6, PRPF19, RPLP0, TOMM20 and WDR77. Binds to CDK5. It depends on Mg(2+) as a cofactor. Mn(2+) serves as cofactor. Phosphorylated. Phosphorylation by kinase PKC or casein kinase CK2 results in enhanced redox activity that stimulates binding of the FOS/JUN AP-1 complex to its cognate binding site. AP-endodeoxyribonuclease activity is not affected by CK2-mediated phosphorylation. Phosphorylation of Thr-233 by CDK5 in response to MPP(+)/MPTP (1-methyl-4-phenylpyridinium) reduces AP-endodeoxyribonuclease activity resulting in accumulation of DNA damage and contributing to neuronal death. Post-translationally, acetylated on Lys-6 and Lys-7. Acetylation is increased by the transcriptional coactivator EP300 acetyltransferase, genotoxic agents like H(2)O(2) and methyl methanesulfonate (MMS). Acetylation increases its binding affinity to the negative calcium response element (nCaRE) DNA promoter. The acetylated form induces a stronger binding of YBX1 to the Y-box sequence in the MDR1 promoter than the unacetylated form. Deacetylated on lysines. Lys-6 and Lys-7 are deacetylated by SIRT1. In terms of processing, cleaved at Lys-31 by granzyme A to create the mitochondrial form; leading in reduction of binding to DNA, AP endodeoxyribonuclease activity, redox activation of transcription factors and to enhanced cell death. Cleaved by granzyme K; leading to intracellular ROS accumulation and enhanced cell death after oxidative stress. Cys-69 and Cys-93 are nitrosylated in response to nitric oxide (NO) and lead to the exposure of the nuclear export signal (NES). Post-translationally, ubiquitinated by MDM2; leading to translocation to the cytoplasm and proteasomal degradation.

It is found in the nucleus. It localises to the nucleolus. The protein localises to the nucleus speckle. Its subcellular location is the endoplasmic reticulum. The protein resides in the cytoplasm. It is found in the mitochondrion. The enzyme catalyses a deoxyribonucleotide-2'-deoxyribose-5'-monophosphate-DNA + H2O = a 5'-end 2'-deoxyribose-5'-monophosphate-DNA + a 3'-end 2'-deoxyribonucleotide-DNA + H(+). It catalyses the reaction Exonucleolytic cleavage in the 3'- to 5'-direction to yield nucleoside 5'-phosphates.. It carries out the reaction a 3'-end 2'-deoxyribonucleotide-3'-phosphoglycolate-DNA + H2O = 2-phosphoglycolate + a 3'-end 2'-deoxyribonucleotide-DNA + H(+). The catalysed reaction is a 3'-end 2'-deoxyribonucleotide-8-oxoguanine-DNA + H2O = 8-oxo-dGMP + a 3'-end 2'-deoxyribonucleotide-DNA + H(+). Its activity is regulated as follows. NPM1 stimulates endodeoxyribonuclease activity on double-stranded DNA with AP sites, but inhibits endoribonuclease activity on single-stranded RNA containing AP sites. Multifunctional protein that plays a central role in the cellular response to oxidative stress. The two major activities of APEX1 are DNA repair and redox regulation of transcriptional factors. Functions as an apurinic/apyrimidinic (AP) endodeoxyribonuclease in the base excision repair (BER) pathway of DNA lesions induced by oxidative and alkylating agents. Initiates repair of AP sites in DNA by catalyzing hydrolytic incision of the phosphodiester backbone immediately adjacent to the damage, generating a single-strand break with 5'-deoxyribose phosphate and 3'-hydroxyl ends. Also incises at AP sites in the DNA strand of DNA/RNA hybrids, single-stranded DNA regions of R-loop structures, and single-stranded RNA molecules. Operates at switch sites of immunoglobulin (Ig) constant regions where it mediates Ig isotype class switch recombination. Processes AP sites induced by successive action of AICDA and UNG. Generates staggered nicks in opposite DNA strands resulting in the formation of double-strand DNA breaks that are finally resolved via non-homologous end joining repair pathway. Has 3'-5' exodeoxyribonuclease activity on mismatched deoxyribonucleotides at the 3' termini of nicked or gapped DNA molecules during short-patch BER. Possesses DNA 3' phosphodiesterase activity capable of removing lesions (such as phosphoglycolate and 8-oxoguanine) blocking the 3' side of DNA strand breaks. Also acts as an endoribonuclease involved in the control of single-stranded RNA metabolism. Plays a role in regulating MYC mRNA turnover by preferentially cleaving in between UA and CA dinucleotides of the MYC coding region determinant (CRD). In association with NMD1, plays a role in the rRNA quality control process during cell cycle progression. Acts as a loading factor for POLB onto non-incised AP sites in DNA and stimulates the 5'-terminal deoxyribose 5'-phosphate (dRp) excision activity of POLB. Exerts reversible nuclear redox activity to regulate DNA binding affinity and transcriptional activity of transcriptional factors by controlling the redox status of their DNA-binding domain, such as the FOS/JUN AP-1 complex after exposure to IR. Involved in calcium-dependent down-regulation of parathyroid hormone (PTH) expression by binding to negative calcium response elements (nCaREs). Together with HNRNPL or the dimer XRCC5/XRCC6, associates with nCaRE, acting as an activator of transcriptional repression. May also play a role in the epigenetic regulation of gene expression by participating in DNA demethylation. Stimulates the YBX1-mediated MDR1 promoter activity, when acetylated at Lys-6 and Lys-7, leading to drug resistance. Plays a role in protection from granzyme-mediated cellular repair leading to cell death. Binds DNA and RNA. Associates, together with YBX1, on the MDR1 promoter. Together with NPM1, associates with rRNA. This Pongo pygmaeus (Bornean orangutan) protein is DNA repair nuclease/redox regulator APEX1 (APEX1).